Consider the following 62-residue polypeptide: Large ribosomal subunit protein eL24 (62 aa).

4 residues coordinate Zn(2+): Cys7, Cys10, Cys33, and Cys37. Residues 7-37 form a C4-type zinc finger; the sequence is CSFCGKDILPGTGLMYVRNDGSLLWFCSSKC.

The protein belongs to the eukaryotic ribosomal protein eL24 family. As to quaternary structure, part of the 50S ribosomal subunit. Forms a cluster with proteins L3 and L14. The cofactor is Zn(2+).

Its function is as follows. Binds to the 23S rRNA. The protein is Large ribosomal subunit protein eL24 of Sulfolobus acidocaldarius (strain ATCC 33909 / DSM 639 / JCM 8929 / NBRC 15157 / NCIMB 11770).